Here is a 180-residue protein sequence, read N- to C-terminus: Nucleoside triphosphate/diphosphate phosphatase (180 aa).

The active-site Proton donor is Arg-26. Mg(2+)-binding residues include Asn-90, Asp-106, Asp-108, Asp-110, Asp-123, and Glu-126.

It belongs to the Ntdp family. The cofactor is Mg(2+).

The enzyme catalyses a ribonucleoside 5'-triphosphate + H2O = a ribonucleoside 5'-diphosphate + phosphate + H(+). It catalyses the reaction a ribonucleoside 5'-diphosphate + H2O = a ribonucleoside 5'-phosphate + phosphate + H(+). Functionally, has nucleoside phosphatase activity towards nucleoside triphosphates and nucleoside diphosphates. This is Nucleoside triphosphate/diphosphate phosphatase from Staphylococcus aureus (strain MRSA252).